The sequence spans 65 residues: Ubiquinol-cytochrome-c reductase complex assembly factor 6 (65 aa).

Over 1–9 (MPAGVSWPR) the chain is Mitochondrial matrix. A helical; Signal-anchor for type II membrane protein transmembrane segment spans residues 10–32 (YLRMFAASVLSMFAGAQVVHHYY). Residues 33–65 (RPDLSIPEIPPKPGELRTELLGLKERQMDSQKQ) lie on the Mitochondrial intermembrane side of the membrane.

It belongs to the UQCC6 family. As to expression, highly expressed in skeletal and cardiac muscle (at protein level).

It is found in the mitochondrion inner membrane. Required for the assembly and stability of the mitochondrial ubiquinol-cytochrome c reductase complex (complex III (CIII) or cytochrome b-c1 complex), a multisubunit transmembrane complex that is part of the mitochondrial electron transport chain (ETC) which drives oxidative phosphorylation. Mediates early complex III biogenesis. Participates in regulating the levels of electron transport chain proteins, and therefore energy supply, in response to changes in energy demand. Also required for cytochrome c oxidase complex (complex IV) assembly. The polypeptide is Ubiquinol-cytochrome-c reductase complex assembly factor 6 (uqcc6) (Danio rerio (Zebrafish)).